Here is an 85-residue protein sequence, read N- to C-terminus: Toxin TdNa9 (85 aa).

Positions 1–21 (MLKFAIAVALLLFIGLELREA) are cleaved as a signal peptide. Residues 22-84 (RDGYPQSKVN…YGDPGTKPCM (63 aa)) enclose the LCN-type CS-alpha/beta domain. 4 disulfides stabilise this stretch: Cys33–Cys83, Cys37–Cys58, Cys43–Cys63, and Cys47–Cys65.

Belongs to the long (4 C-C) scorpion toxin superfamily. Sodium channel inhibitor family. Beta subfamily. As to expression, expressed by the venom gland.

Its subcellular location is the secreted. Its function is as follows. Alpha toxins bind voltage-independently at site-3 of sodium channels (Nav) and inhibit the inactivation of the activated channels, thereby blocking neuronal transmission. This toxin binds, in vitro, to sodium channels and inhibits the inactivation of the activated channels. Seems not toxic to mice, crickets and sweet-water shrimps. The chain is Toxin TdNa9 from Tityus discrepans (Venezuelan scorpion).